The primary structure comprises 427 residues: Interleukin-13 receptor subunit alpha-1 (427 aa).

The N-terminal stretch at 1–21 (MEWPARLCGLWALLLCAGGGG) is a signal peptide. The Extracellular portion of the chain corresponds to 22-343 (GGGGAAPTET…MSIGKKRNST (322 aa)). Fibronectin type-III domains follow at residues 34–123 (PVTN…PPEG), 128–226 (AVTE…TSRV), and 227–339 (KPDP…IGKK). N-linked (GlcNAc...) asparagine glycosylation is found at N37 and N61. Disulfide bonds link C62/C102, C95/C117, and C134/C144. N-linked (GlcNAc...) asparagine glycans are attached at residues N105, N138, and N157. C173 and C185 are disulfide-bonded. N-linked (GlcNAc...) asparagine glycosylation is found at N235, N265, N293, N329, and N341. Disulfide bonds link C257–C320 and C282–C296. The short motif at 327–331 (WSNWS) is the WSXWS motif element. Residues 344 to 367 (LYITMLLIVPVIVAGAIIVLLLYL) traverse the membrane as a helical segment. Residues 368 to 427 (KRLKIIIFPPIPDPGKIFKEMFGDQNDDTLHWKKYDIYEKQTKEETDSVVLIENLKKASQ) lie on the Cytoplasmic side of the membrane. Residues 374–382 (IFPPIPDPG) carry the Box 1 motif motif.

The protein belongs to the type I cytokine receptor family. Type 5 subfamily. In terms of assembly, interleukin-13 receptor is a complex of IL4R, IL13RA1, and possibly other components. Interacts with TRAF3IP1. Interacts with IL4. Ubiquitous. Highest levels in heart, liver, skeletal muscle and ovary; lowest levels in brain, lung and kidney. Also found in B-cells, T-cells and endothelial cells.

It is found in the membrane. Binds with low affinity to interleukin-13 (IL13). Together with IL4RA can form a functional receptor for IL13. Also serves as an alternate accessory protein to the common cytokine receptor gamma chain for interleukin-4 (IL4) signaling, but cannot replace the function of IL2RG in allowing enhanced interleukin-2 (IL2) binding activity. The polypeptide is Interleukin-13 receptor subunit alpha-1 (IL13RA1) (Homo sapiens (Human)).